The following is a 442-amino-acid chain: Lysosomal dipeptide transporter MFSD1 (442 aa).

The Dileucine internalization motif signature appears at 8–9 (LL). 10 consecutive transmembrane segments (helical) span residues 38–58 (LLVL…YDNP), 85–105 (TVIF…GALV), 107–127 (AFWL…SLAV), 187–207 (LLIG…LAYL), 238–258 (LWLI…FIGL), 276–296 (AINS…GILV), 303–323 (IIWV…LAFT), 333–353 (LLGV…AFVV), 364–384 (FMQS…GMIL), and 390–410 (LFLE…VVML).

It belongs to the major facilitator superfamily. As to quaternary structure, homodimer. Interacts with lysosomal protein GLMP (via lumenal domain); the interaction starts while both proteins are still in the endoplasmic reticulum and is required for stabilization of MFSD1 in lysosomes but has no direct effect on its targeting to lysosomes or transporter activity.

It localises to the lysosome membrane. It carries out the reaction L-alpha-aminoacyl-L-arginine(out) = L-alpha-aminoacyl-L-arginine(in). The enzyme catalyses L-arginyl-L-alpha-amino acid(out) = L-arginyl-L-alpha-amino acid(in). The catalysed reaction is L-arginyl-glycine(out) = L-arginyl-glycine(in). It catalyses the reaction L-alpha-aminoacyl-L-lysine(out) = L-alpha-aminoacyl-L-lysine(in). It carries out the reaction L-aspartyl-L-lysine(out) = L-aspartyl-L-lysine(in). The enzyme catalyses L-alanyl-L-lysine(out) = L-alanyl-L-lysine(in). The catalysed reaction is L-lysyl-L-alpha-amino acid(out) = L-lysyl-L-alpha-amino acid(in). It catalyses the reaction L-lysyl-L-alanine(out) = L-lysyl-L-alanine(in). It carries out the reaction L-lysyl-L-lysine(out) = L-lysyl-L-lysine(in). The enzyme catalyses L-lysyl-glycine(out) = L-lysyl-glycine(in). The catalysed reaction is L-alpha-aminoacyl-L-histidine(out) = L-alpha-aminoacyl-L-histidine(in). It catalyses the reaction L-histidyl-L-alpha-amino acid(out) = L-histidyl-L-alpha-amino acid(in). It carries out the reaction L-histidyl-glycine(out) = L-histidyl-glycine(in). Functionally, lysosomal dipeptide uniporter that selectively exports lysine, arginine or histidine-containing dipeptides with a net positive charge from the lysosome lumen into the cytosol. Could play a role in a specific type of protein O-glycosylation indirectly regulating macrophages migration and tissue invasion. Also essential for liver homeostasis. The sequence is that of Lysosomal dipeptide transporter MFSD1 from Gallus gallus (Chicken).